The following is a 182-amino-acid chain: Ribosome-recycling factor (182 aa).

It belongs to the RRF family.

It is found in the cytoplasm. Responsible for the release of ribosomes from messenger RNA at the termination of protein biosynthesis. May increase the efficiency of translation by recycling ribosomes from one round of translation to another. The chain is Ribosome-recycling factor from Gloeobacter violaceus (strain ATCC 29082 / PCC 7421).